The chain runs to 588 residues: Acid beta-fructofuranosidase 1, vacuolar (588 aa).

Residues 1 to 31 are Cytoplasmic-facing; it reads MDTSTSAYAPLPGEDPLFSGHPPASLRRSWK. A propeptide spans 1-115 (removed in mature form); that stretch reads MDTSTSAYAP…LSYNWTNAMF (115 aa). A helical; Signal-anchor for type II membrane protein transmembrane segment spans residues 32–52; it reads GFAVIFASVLFLLSLVGLIIH. The Lumenal portion of the chain corresponds to 53–588; sequence QGPQQPPDVM…LRALRKEVGR (536 aa). The disordered stretch occupies residues 57-86; the sequence is QPPDVMPDKQDEHHHPQSTTPASETTASWE. The segment covering 62–71 has biased composition (basic and acidic residues); the sequence is MPDKQDEHHH. The span at 73–84 shows a compositional bias: polar residues; the sequence is QSTTPASETTAS. Substrate contacts are provided by residues 130–133, Gln-149, and Trp-157; that span reads WMND. Asp-133 is an active-site residue. Asn-159 carries N-linked (GlcNAc...) asparagine glycosylation. 192-193 contributes to the substrate binding site; the sequence is WS. Asn-226 carries an N-linked (GlcNAc...) asparagine glycan. Substrate contacts are provided by residues 256 to 257, Glu-311, and Asp-344; that span reads RD. An intrachain disulfide couples Cys-499 to Cys-545.

Belongs to the glycosyl hydrolase 32 family. Monomer. May be present in two forms, a 70 kDa monomer and a heterodimer of the 30 kDa and 38 kDa subunits. The ratio of the levels of the two forms within cells appears to be regulated developmentally. Glycosylated. As to expression, expressed in buds, stems, roots and leaves. Expressed in the epidermal cells of young leaves and of primordial leaves.

It localises to the membrane. Its subcellular location is the vacuole lumen. It catalyses the reaction Hydrolysis of terminal non-reducing beta-D-fructofuranoside residues in beta-D-fructofuranosides.. Functionally, acidic vacuolar invertase involved in light-induced bud burst. This is Acid beta-fructofuranosidase 1, vacuolar from Rosa hybrid cultivar.